A 266-amino-acid chain; its full sequence is NADH dehydrogenase [ubiquinone] iron-sulfur protein 3, mitochondrial (266 aa).

The transit peptide at 1–38 (MAAAVAAAARGCWQRLVGSAAPARVAGRPSVLLLPVRR) directs the protein to the mitochondrion.

The protein belongs to the complex I 30 kDa subunit family. Core subunit of respiratory chain NADH dehydrogenase (Complex I) which is composed of 45 different subunits. Interacts with NDUFAF3. Interacts with RAB5IF. Found in subcomplexes containing subunits NDUFS2, MT-ND1 and NDUFA13.

It is found in the mitochondrion inner membrane. It carries out the reaction a ubiquinone + NADH + 5 H(+)(in) = a ubiquinol + NAD(+) + 4 H(+)(out). In terms of biological role, core subunit of the mitochondrial membrane respiratory chain NADH dehydrogenase (Complex I) which catalyzes electron transfer from NADH through the respiratory chain, using ubiquinone as an electron acceptor. Essential for the catalytic activity and assembly of complex I. The sequence is that of NADH dehydrogenase [ubiquinone] iron-sulfur protein 3, mitochondrial (NDUFS3) from Bos taurus (Bovine).